Reading from the N-terminus, the 101-residue chain is Urease subunit beta (101 aa).

Belongs to the urease beta subunit family. As to quaternary structure, heterotrimer of UreA (gamma), UreB (beta) and UreC (alpha) subunits. Three heterotrimers associate to form the active enzyme.

The protein localises to the cytoplasm. The enzyme catalyses urea + 2 H2O + H(+) = hydrogencarbonate + 2 NH4(+). It functions in the pathway nitrogen metabolism; urea degradation; CO(2) and NH(3) from urea (urease route): step 1/1. This Bradyrhizobium sp. (strain ORS 278) protein is Urease subunit beta.